We begin with the raw amino-acid sequence, 23 residues long: Paralytic peptide 1 (23 aa).

A disulfide bond links cysteine 7 and cysteine 19.

The protein belongs to the GBP/PSP1/paralytic peptide family. As to expression, hemolymph.

Its function is as follows. Causes rapid, rigid paralysis when injected into Lepidopteran larvae. The physiological role may be to reduce hemolymph loss following injury and promote wound healing. The sequence is that of Paralytic peptide 1 from Heliothis virescens (Tobacco budworm moth).